The following is a 391-amino-acid chain: Phosphoprotein (391 aa).

An N-terminus domain region spans residues 1 to 194; sequence MDQFIKQDET…GSLSGATLYA (194 aa). Thr-10, Thr-16, Thr-91, Thr-150, and Thr-165 each carry phosphothreonine. The residue at position 188 (Ser-188) is a Phosphoserine. The multimerization stretch occupies residues 216–279; sequence ISANEIMDLL…MATVKIMDPG (64 aa). A coiled-coil region spans residues 218–245; that stretch reads ANEIMDLLRGMDARLQHLEQKVDKVLAQ. Thr-250 bears the Phosphothreonine mark. Ser-257 is modified (phosphoserine). Phosphothreonine occurs at positions 258 and 282. Residues Ser-292 and Ser-294 each carry the phosphoserine modification. A Phosphothreonine modification is found at Thr-298. Phosphoserine is present on residues Ser-301 and Ser-374. Residues 343–391 form an interaction with the nucleoprotein region; sequence AGQKVMITKMITDCVANPQMKQAFEQRLAKASTEDALNDIKRDIIRSAI. Position 375 is a phosphothreonine (Thr-375).

The protein belongs to the rubulavirus/avulavirus P protein family. As to quaternary structure, homotetramer. Interacts (via multimerization domain) with polymerase L; this interaction forms the polymerase L-P complex. Interacts (via N-terminus) with N0 (via Ncore); this interaction allows P to chaperon N0 to avoid N polymerization before encapsidation. Interacts (via C-terminus) with N-RNA template; this interaction positions the polymerase on the template for both transcription and replication. Interacts with host RPS6KB1 kinase; this interaction may play a role in the viral replication and transcription.

The protein localises to the virion. Functionally, essential cofactor of the RNA polymerase L that plays a central role in the transcription and replication by forming the polymerase complex with RNA polymerase L and recruiting L to the genomic N-RNA template for RNA synthesis. Also plays a central role in the encapsidation of nascent RNA chains by forming the encapsidation complex with the nucleocapsid protein N (N-P complex). Acts as a chaperone for newly synthesized free N protein, so-called N0, allowing encapsidation of nascent RNA chains during replication. The nucleoprotein protein N prevents excessive phosphorylation of P, which leads to down-regulation of viral transcription/ replication. Participates, together with N, in the formation of viral factories (viroplasms), which are large inclusions in the host cytoplasm where replication takes place. This chain is Phosphoprotein, found in Homo sapiens (Human).